A 527-amino-acid chain; its full sequence is Cytochrome P450 monooygenase 3 (527 aa).

Residues 21–41 (IAVAFAALCGATGLLAFSWWI) form a helical membrane-spanning segment. Cys-473 contributes to the heme binding site.

Belongs to the cytochrome P450 family. The cofactor is heme.

It localises to the membrane. It functions in the pathway plant hormone biosynthesis; gibberellin biosynthesis. Functionally, gibberellin 13-hydroxylase; part of the gene cluster that mediates the biosynthesis of gibberellins (GAs), diterpenoids that may provide a selective advantage during infection of the preferred host plant, rice. Gibberellins (GAs) are diterpenoids and are synthesized via the mevalonate pathway. Biosynthesis of the major metabolite GA3 (gibberellic acid) from geranylgeranyl diphosphate (GGPP) requires 13 steps. The GGPP produced by the geranylgeranyl diphosphate synthase GGS2 is converted to ent-kaurene via ent-copalyldiphosphate in a two-step cyclization reaction performed by the bifunctional ent-copalyl diphosphate synthase/ent-kaurene synthase enzyme (CPS/KS). Ent-Kaurene is metabolized to GAs by a series of oxidation reactions catalyzed by cytochrome P450 monooxygenases. Cytochrome P450 monooxygenase P450-4 is an ent-kaurene oxidase that catalyzes the three oxidation steps between ent-kaurene and ent-kaurenoic acid. The highly multifunctional cytochrome P450 monooxygenase P450-1 then catalyzes four steps involving oxidation at two carbon atoms, in the main pathway from ent-kaurenoic acid to GA14 via GA12-aldehyde as well as producing kaurenolides and fujenoic acids as by-products. The cytochrome P450 monooxygenase P450-2 then converts GA14 to GA4 by removal of C-20. GA4 is further converted to GA7 by the GA4 desaturase DES via 1,2-desaturation before cytochrome P450 monooxygenase P450-3, a 13-hydroxylase, hydroxylates GA7 to GA3, the final product of the GA-biosynthetic pathway. The protein is Cytochrome P450 monooygenase 3 of Gibberella fujikuroi (strain CBS 195.34 / IMI 58289 / NRRL A-6831) (Bakanae and foot rot disease fungus).